A 200-amino-acid chain; its full sequence is MLIATRNEGKTKEFRAIFDKLGYDVENLNDYPDLPEVAETGMTFEENARLKAETISQLTGKMVLADDSGLKVDVLGGLPGVWSARFAGVGATDRENNAKLLHELAMVFELKDRSAQFHTTLVVASPNKESLVVEADWSGYINFEPKGENGFGYDPLFLVGETGESSAELTLEEKNSQSHRALAVKKLLEVFPSWQSKPSL.

5–10 (TRNEGK) lines the substrate pocket. The active-site Proton acceptor is the D67. D67 serves as a coordination point for Mg(2+). Residues S68, 151-154 (FGYD), K174, and 179-180 (HR) each bind substrate.

Belongs to the HAM1 NTPase family. Homodimer. The cofactor is Mg(2+).

The enzyme catalyses XTP + H2O = XMP + diphosphate + H(+). It catalyses the reaction dITP + H2O = dIMP + diphosphate + H(+). It carries out the reaction ITP + H2O = IMP + diphosphate + H(+). Pyrophosphatase that catalyzes the hydrolysis of nucleoside triphosphates to their monophosphate derivatives, with a high preference for the non-canonical purine nucleotides XTP (xanthosine triphosphate), dITP (deoxyinosine triphosphate) and ITP. Seems to function as a house-cleaning enzyme that removes non-canonical purine nucleotides from the nucleotide pool, thus preventing their incorporation into DNA/RNA and avoiding chromosomal lesions. This Streptococcus pneumoniae serotype 4 (strain ATCC BAA-334 / TIGR4) protein is dITP/XTP pyrophosphatase.